A 432-amino-acid polypeptide reads, in one-letter code: MNLIESARAGLITPEMEQVAVQEGVTPEFVRQGVADGTIVILRNARRQNVTPVGVGKGLRTKVSASVGLYGETGGIDVEVAKIKAAVEAGTDAIMDLSVSGDIEAMLAETLAVSPKPVGTLPLYQAMAEAGRKYGSSVNMRDEDLFDVIERHAAAGVDFLALHCGTTMNIVERARNEGRIDPLVSYGGSHLIGWMLANRRENPLYEHFDRVLAIARKYDVTISFADGMRPGCLADSLDGPQVEELVVLGELVRRAREAGVQVMVKGPGHVPLQQLKATVVLEKSLCHGAPYFVFGPLVTDIAIGYDHINAAIGGALSAWAGAEFLCYVTAAEHVGIPDIDQVREGVIAARIAAHAADLANGLTCAREWDRELSRARKELDWKRQIALAIDPERAGRLREERSDAAAAGCAMCGKYCAMEIVSRYLGTARHTC.

Substrate is bound by residues M95, Y124, H163, 185 to 187 (SYG), and 226 to 229 (DGMR). H269 contacts Zn(2+). Residue F292 coordinates substrate. A Zn(2+)-binding site is contributed by H333. [4Fe-4S] cluster contacts are provided by C409, C412, and C416.

It belongs to the ThiC family. 5-hydroxybenzimidazole synthase subfamily. [4Fe-4S] cluster is required as a cofactor.

The catalysed reaction is 5-amino-1-(5-phospho-beta-D-ribosyl)imidazole + AH2 + S-adenosyl-L-methionine = 5-hydroxybenzimidazole + 5'-deoxyadenosine + formate + L-methionine + A + NH4(+) + phosphate + 2 H(+). Together with BzaB, probably catalyzes the conversion of aminoimidazole ribotide (AIR) to 5-hydroxybenzimidazole (5-HBI) in a radical S-adenosyl-L-methionine (SAM)-dependent reaction. Is thus involved in the anaerobic biosynthesis of the benzimidazole lower axial ligand of the cobamide produced by M.thermoacetica. Requires BzaB for catalytic activity, as BzaA alone displays no activity. This chain is 5-hydroxybenzimidazole synthase BzaA, found in Moorella thermoacetica (strain ATCC 39073 / JCM 9320).